Consider the following 420-residue polypeptide: Zinc finger and BTB domain-containing protein 42 (420 aa).

The region spanning 24–92 is the BTB domain; that stretch reads CDCTVLVGDA…MYEGRLDLHS (69 aa). Disordered regions lie at residues 174 to 204 and 216 to 248; these read PPSWQVSEESSGALDLSLKPGPRPEQAHPPC and QGAQPLVKAEQDSFSEQDSSSPQSADRSPPPVC. Residues 227-241 show a composition bias toward low complexity; that stretch reads DSFSEQDSSSPQSAD. C2H2-type zinc fingers lie at residues 292–314, 332–354, 360–382, and 388–411; these read CICPLCCKLFPSTHALQPHLSAH, PTCPLCSKTFSCTYTLKRHERTH, YTCVQCGKSFQYSHNLSRHAVVH, and HACRWCERRFTQSGDLYRHVRKFH.

The protein belongs to the krueppel C2H2-type zinc-finger protein family. ZBTB18 subfamily.

The protein localises to the cytoplasm. The protein resides in the nucleus. Its subcellular location is the nucleoplasm. Functionally, transcriptional repressor. Specifically binds DNA and probably acts by recruiting chromatin remodeling multiprotein complexes. This Rattus norvegicus (Rat) protein is Zinc finger and BTB domain-containing protein 42 (Zbtb42).